A 483-amino-acid chain; its full sequence is Elastin-binding protein EbpS (483 aa).

Basic and acidic residues predominate over residues 1–40 (MSNNFKDDFEKNRQSIDTNSHQDHTEEVEKDQSELEHQDT). The interval 1 to 311 (MSNNFKDDFE…HHDRDKERKK (311 aa)) is disordered. Residues 14 to 34 (QSIDTNSHQDHTEEVEKDQSE) form an elastin-binding region. The segment covering 64–85 (TNHNKQVHNESQTSEDNVQNEA) has biased composition (polar residues). 3 stretches are compositionally biased toward basic and acidic residues: residues 103–118 (EPSH…EEYY), 126–160 (DKSH…KSEA), and 180–199 (SKDK…SKDH). Residues 204–222 (KGAAIGAGTAGVAGAMAAS) show a composition bias toward low complexity. Polar residues predominate over residues 230-243 (DAQNKSNSGKANNS). Basic and acidic residues predominate over residues 244–256 (TEDKASQDKSKEH). Positions 275–294 (GAASKSASAASKPHASNNAS) are enriched in low complexity. Positions 296–311 (NHDEHDHHDRDKERKK) are enriched in basic and acidic residues. The helical transmembrane segment at 317-337 (VLLPLIAAVLIIGALAIFGGM) threads the bilayer. The disordered stretch occupies residues 348–437 (ENKIANTNKN…QRQGGGQRHT (90 aa)). Positions 358–395 (NADESKDKDTSKDASKDKSKSTDSDKSKEDQDKATKDE) are enriched in basic and acidic residues. Residues 400–428 (QNNANQANNQAQNNQNQQQANQNQQQQQQ) are compositionally biased toward low complexity. In terms of domain architecture, LysM spans 434-482 (QRHTVNGQENLYRIAIQYYGSGSPENVEKIRRANGLSGNNIRNGQQIVI).

Its subcellular location is the cell membrane. Its function is as follows. Promotes binding of soluble elastin peptides and tropoelastin to S.aureus cells although it is not able to promote bacterial adherence to immobilized elastin and, therefore, is not a microbial surface component recognizing adhesive matrix molecule (MSCRAMM). This Staphylococcus aureus (strain bovine RF122 / ET3-1) protein is Elastin-binding protein EbpS (ebpS).